A 986-amino-acid polypeptide reads, in one-letter code: Ephrin type-A receptor 4-A (986 aa).

A signal peptide spans 1–20 (MAGIVHGILFCGLFGLCWAV). Topologically, residues 21–547 (TGSRIYPASE…MIGEGASPTV (527 aa)) are extracellular. Residues 30-209 (EVTLLDSRSV…FYKKCPLTVR (180 aa)) form the Eph LBD domain. Fibronectin type-III domains are found at residues 328-438 (PPSA…TNQA) and 439-536 (APST…TVPS). Residues Asn-340 and Asn-407 are each glycosylated (N-linked (GlcNAc...) asparagine). A helical membrane pass occupies residues 548–569 (LLVSVAGSIVLVVILIAAFVIS). At 570 to 986 (RRRSKYSKAK…QQIQGRMVPV (417 aa)) the chain is on the cytoplasmic side. Phosphotyrosine; by autocatalysis occurs at positions 595 and 601. Residues 620–881 (IKIEKVIGVG…QIVSMLDKLI (262 aa)) form the Protein kinase domain. ATP contacts are provided by residues 626–634 (IGVGEFGEV) and Lys-652. The active-site Proton acceptor is the Asp-745. 2 positions are modified to phosphotyrosine; by autocatalysis: Tyr-778 and Tyr-928. The SAM domain maps to 911-975 (SQVASVLDWL…LSSVQGMRTQ (65 aa)). The PDZ-binding signature appears at 984-986 (VPV).

It belongs to the protein kinase superfamily. Tyr protein kinase family. Ephrin receptor subfamily.

It localises to the cell membrane. It is found in the early endosome. The enzyme catalyses L-tyrosyl-[protein] + ATP = O-phospho-L-tyrosyl-[protein] + ADP + H(+). Receptor tyrosine kinase which binds membrane-bound ephrin family ligands residing on adjacent cells, leading to contact-dependent bidirectional signaling into neighboring cells. The signaling pathway downstream of the receptor is referred to as forward signaling while the signaling pathway downstream of the ephrin ligand is referred to as reverse signaling. Highly promiscuous, it has the unique property among Eph receptors to bind and to be physiologically activated by both GPI-anchored ephrin-A and transmembrane ephrin-B ligands including EFNA1 and EFNB3. Upon activation by ephrin ligands, modulates cell morphology and integrin-dependent cell adhesion through regulation of the Rac, Rap and Rho GTPases activity. Plays an important role in the development of the nervous system controlling different steps of axonal guidance including the establishment of the corticospinal projections. This Xenopus laevis (African clawed frog) protein is Ephrin type-A receptor 4-A (epha4-a).